The chain runs to 365 residues: 3-isopropylmalate dehydrogenase (365 aa).

78-91 (GPKWDTLPAEERPE) provides a ligand contact to NAD(+). The substrate site is built by Arg-99, Arg-109, Arg-138, and Asp-227. Mg(2+) is bound by residues Asp-227, Asp-251, and Asp-255. Residue 285-297 (GSAPDIAGKNIAN) participates in NAD(+) binding.

The protein belongs to the isocitrate and isopropylmalate dehydrogenases family. LeuB type 1 subfamily. As to quaternary structure, homodimer. Mg(2+) is required as a cofactor. Mn(2+) serves as cofactor.

Its subcellular location is the cytoplasm. The enzyme catalyses (2R,3S)-3-isopropylmalate + NAD(+) = 4-methyl-2-oxopentanoate + CO2 + NADH. It participates in amino-acid biosynthesis; L-leucine biosynthesis; L-leucine from 3-methyl-2-oxobutanoate: step 3/4. Its function is as follows. Catalyzes the oxidation of 3-carboxy-2-hydroxy-4-methylpentanoate (3-isopropylmalate) to 3-carboxy-4-methyl-2-oxopentanoate. The product decarboxylates to 4-methyl-2 oxopentanoate. The sequence is that of 3-isopropylmalate dehydrogenase from Syntrophotalea carbinolica (strain DSM 2380 / NBRC 103641 / GraBd1) (Pelobacter carbinolicus).